Here is a 140-residue protein sequence, read N- to C-terminus: Large ribosomal subunit protein uL11 (140 aa).

Belongs to the universal ribosomal protein uL11 family. In terms of assembly, part of the ribosomal stalk of the 50S ribosomal subunit. Interacts with L10 and the large rRNA to form the base of the stalk. L10 forms an elongated spine to which L12 dimers bind in a sequential fashion forming a multimeric L10(L12)X complex. Post-translationally, one or more lysine residues are methylated.

In terms of biological role, forms part of the ribosomal stalk which helps the ribosome interact with GTP-bound translation factors. In Thermoanaerobacter pseudethanolicus (strain ATCC 33223 / 39E) (Clostridium thermohydrosulfuricum), this protein is Large ribosomal subunit protein uL11.